A 563-amino-acid chain; its full sequence is Putative ABC transporter ATP-binding protein SCO2324 (563 aa).

Residues Ile-2–Leu-243 form the ABC transporter 1 domain. Gly-36 to Ser-43 provides a ligand contact to ATP. The disordered stretch occupies residues Ala-271 to Ala-317. Pro residues predominate over residues His-278–Arg-293. One can recognise an ABC transporter 2 domain in the interval Ala-317 to Lys-545. Gly-349–Ser-356 contributes to the ATP binding site.

The protein belongs to the ABC transporter superfamily.

It is found in the cell membrane. In terms of biological role, probably part of an ABC transporter complex. Responsible for energy coupling to the transport system. This chain is Putative ABC transporter ATP-binding protein SCO2324, found in Streptomyces coelicolor (strain ATCC BAA-471 / A3(2) / M145).